A 259-amino-acid polypeptide reads, in one-letter code: Imidazole glycerol phosphate synthase subunit HisF (259 aa).

Active-site residues include aspartate 11 and aspartate 130.

Belongs to the HisA/HisF family. Heterodimer of HisH and HisF.

It localises to the cytoplasm. It catalyses the reaction 5-[(5-phospho-1-deoxy-D-ribulos-1-ylimino)methylamino]-1-(5-phospho-beta-D-ribosyl)imidazole-4-carboxamide + L-glutamine = D-erythro-1-(imidazol-4-yl)glycerol 3-phosphate + 5-amino-1-(5-phospho-beta-D-ribosyl)imidazole-4-carboxamide + L-glutamate + H(+). It participates in amino-acid biosynthesis; L-histidine biosynthesis; L-histidine from 5-phospho-alpha-D-ribose 1-diphosphate: step 5/9. Its function is as follows. IGPS catalyzes the conversion of PRFAR and glutamine to IGP, AICAR and glutamate. The HisF subunit catalyzes the cyclization activity that produces IGP and AICAR from PRFAR using the ammonia provided by the HisH subunit. The polypeptide is Imidazole glycerol phosphate synthase subunit HisF (Desulforapulum autotrophicum (strain ATCC 43914 / DSM 3382 / VKM B-1955 / HRM2) (Desulfobacterium autotrophicum)).